The primary structure comprises 91 residues: MWPIFWTAMRTYAPYVTFPVAFVVGAVGYHLEWFIRGTPNTPGEERGIAELREDRKLEELNGRDSTQVLSLKDKLEFTPRAVLERNRAVKS.

A helical transmembrane segment spans residues tyrosine 12 to phenylalanine 34.

The protein belongs to the SMIM12 family.

The protein resides in the membrane. In Danio rerio (Zebrafish), this protein is Small integral membrane protein 12 (smim12).